The following is a 116-amino-acid chain: UPF0329 protein ECU05_1650 (116 aa).

It belongs to the UPF0329 family.

The sequence is that of UPF0329 protein ECU05_1650 from Encephalitozoon cuniculi (strain GB-M1) (Microsporidian parasite).